The chain runs to 491 residues: Glutamyl-tRNA(Gln) amidotransferase subunit A (491 aa).

Residues lysine 77 and serine 152 each act as charge relay system in the active site. The Acyl-ester intermediate role is filled by serine 176.

Belongs to the amidase family. GatA subfamily. As to quaternary structure, heterotrimer of A, B and C subunits.

It carries out the reaction L-glutamyl-tRNA(Gln) + L-glutamine + ATP + H2O = L-glutaminyl-tRNA(Gln) + L-glutamate + ADP + phosphate + H(+). In terms of biological role, allows the formation of correctly charged Gln-tRNA(Gln) through the transamidation of misacylated Glu-tRNA(Gln) in organisms which lack glutaminyl-tRNA synthetase. The reaction takes place in the presence of glutamine and ATP through an activated gamma-phospho-Glu-tRNA(Gln). The sequence is that of Glutamyl-tRNA(Gln) amidotransferase subunit A from Chlamydia trachomatis serovar L2 (strain ATCC VR-902B / DSM 19102 / 434/Bu).